The chain runs to 197 residues: Adenylate kinase (197 aa).

19–24 (GSGKGT) contributes to the ATP binding site. The interval 39 to 68 (SSGDLLRAEVQSGSPKGKELKAMMERGELV) is NMP. AMP-binding positions include S40, R45, 66 to 68 (ELV), 95 to 98 (RYPR), and Q102. Residues 132-142 (KRAETSNRVDD) are LID. R133 contacts ATP. The AMP site is built by R139 and R150. An ATP-binding site is contributed by G178.

Belongs to the adenylate kinase family. In terms of assembly, monomer.

Its subcellular location is the cytoplasm. The catalysed reaction is AMP + ATP = 2 ADP. Functionally, catalyzes the reversible transfer of the terminal phosphate group between ATP and AMP. Plays an important role in cellular energy homeostasis and in adenine nucleotide metabolism. The protein is Adenylate kinase of Schistosoma mansoni (Blood fluke).